We begin with the raw amino-acid sequence, 179 residues long: Large ribosomal subunit protein uL6 (179 aa).

It belongs to the universal ribosomal protein uL6 family. As to quaternary structure, part of the 50S ribosomal subunit.

Functionally, this protein binds to the 23S rRNA, and is important in its secondary structure. It is located near the subunit interface in the base of the L7/L12 stalk, and near the tRNA binding site of the peptidyltransferase center. This Rhodococcus opacus (strain B4) protein is Large ribosomal subunit protein uL6.